We begin with the raw amino-acid sequence, 345 residues long: UDP-N-acetylenolpyruvoylglucosamine reductase (345 aa).

The FAD-binding PCMH-type domain maps to Leu-16–Ser-186. Arg-162 is a catalytic residue. Ser-232 (proton donor) is an active-site residue. Glu-328 is an active-site residue.

The protein belongs to the MurB family. Requires FAD as cofactor.

It localises to the cytoplasm. The enzyme catalyses UDP-N-acetyl-alpha-D-muramate + NADP(+) = UDP-N-acetyl-3-O-(1-carboxyvinyl)-alpha-D-glucosamine + NADPH + H(+). The protein operates within cell wall biogenesis; peptidoglycan biosynthesis. Cell wall formation. The sequence is that of UDP-N-acetylenolpyruvoylglucosamine reductase from Yersinia pestis.